We begin with the raw amino-acid sequence, 218 residues long: Monomethylamine corrinoid protein 1 (218 aa).

The B12-binding N-terminal domain maps to 1–91 (MANQEIFDKL…ELEKTKVEGE (91 aa)). The 125-residue stretch at 94 to 218 (TGLAITFVAE…AAKVALNIMK (125 aa)) folds into the B12-binding domain. H107 is a methylcob(III)alamin binding site.

It belongs to the methylamine corrinoid protein family. In terms of assembly, can form a complex with MtmB.

It participates in one-carbon metabolism; methanogenesis from methylamine. In terms of biological role, acts as a methyl group carrier between MtmB and MtbA. In Methanosarcina mazei (strain ATCC BAA-159 / DSM 3647 / Goe1 / Go1 / JCM 11833 / OCM 88) (Methanosarcina frisia), this protein is Monomethylamine corrinoid protein 1 (mtmC1).